A 333-amino-acid chain; its full sequence is uncharacterized protein (333 aa).

A Fe/B12 periplasmic-binding domain is found at 45–318; that stretch reads NVIVSDSMFI…EYVKIIHPKI (274 aa).

This is an uncharacterized protein from Methanocaldococcus jannaschii (strain ATCC 43067 / DSM 2661 / JAL-1 / JCM 10045 / NBRC 100440) (Methanococcus jannaschii).